We begin with the raw amino-acid sequence, 491 residues long: Glutamate--tRNA ligase (491 aa).

The 'HIGH' region signature appears at 9–19 (PSPTGTPHVGL). Residues 253–257 (KLSKR) carry the 'KMSKS' region motif. K256 is a binding site for ATP.

This sequence belongs to the class-I aminoacyl-tRNA synthetase family. Glutamate--tRNA ligase type 1 subfamily. In terms of assembly, monomer.

The protein resides in the cytoplasm. It catalyses the reaction tRNA(Glu) + L-glutamate + ATP = L-glutamyl-tRNA(Glu) + AMP + diphosphate. Its function is as follows. Catalyzes the attachment of glutamate to tRNA(Glu) in a two-step reaction: glutamate is first activated by ATP to form Glu-AMP and then transferred to the acceptor end of tRNA(Glu). The polypeptide is Glutamate--tRNA ligase (Mycolicibacterium gilvum (strain PYR-GCK) (Mycobacterium gilvum (strain PYR-GCK))).